We begin with the raw amino-acid sequence, 215 residues long: MRVILLGAPGAGKGTQARFITEKFGIPQISTGDMLRAAVKAGSPLGQQVKGVMDSGGLVSDDIIIALIKERITEADCAKGFLFDGFPRTIPQAEALKDAGVTIDHVVEIAVDDEEIVSRIAGRRVHPASGRVYHTEHNPPKVAGKDDVTGEELIQREDDKEETVRHRLSVYHSQTKPLVDFYQKLSAAEGTPKYHSIAGVGSVEQITAKVLSALS.

10–15 (GAGKGT) contacts ATP. The tract at residues 30–59 (STGDMLRAAVKAGSPLGQQVKGVMDSGGLV) is NMP. AMP contacts are provided by residues Thr31, Arg36, 57 to 59 (GLV), 85 to 88 (GFPR), and Gln92. The LID stretch occupies residues 122–159 (GRRVHPASGRVYHTEHNPPKVAGKDDVTGEELIQREDD). ATP contacts are provided by residues Arg123 and 132 to 133 (VY). AMP is bound by residues Arg156 and Arg167. Gly201 serves as a coordination point for ATP.

It belongs to the adenylate kinase family. Monomer.

The protein localises to the cytoplasm. The catalysed reaction is AMP + ATP = 2 ADP. Its pathway is purine metabolism; AMP biosynthesis via salvage pathway; AMP from ADP: step 1/1. Functionally, catalyzes the reversible transfer of the terminal phosphate group between ATP and AMP. Plays an important role in cellular energy homeostasis and in adenine nucleotide metabolism. This chain is Adenylate kinase, found in Pseudomonas aeruginosa (strain LESB58).